The following is a 208-amino-acid chain: Protein-L-isoaspartate O-methyltransferase (208 aa).

S59 is a catalytic residue.

The protein belongs to the methyltransferase superfamily. L-isoaspartyl/D-aspartyl protein methyltransferase family. As to quaternary structure, monomer.

The protein resides in the cytoplasm. It carries out the reaction [protein]-L-isoaspartate + S-adenosyl-L-methionine = [protein]-L-isoaspartate alpha-methyl ester + S-adenosyl-L-homocysteine. Functionally, catalyzes the methyl esterification of L-isoaspartyl residues in peptides and proteins that result from spontaneous decomposition of normal L-aspartyl and L-asparaginyl residues. It plays a role in the repair and/or degradation of damaged proteins. This chain is Protein-L-isoaspartate O-methyltransferase (pcm), found in Shigella flexneri.